The sequence spans 356 residues: Cytochrome c oxidase subunit 2 (356 aa).

The signal sequence occupies residues 1 to 23; the sequence is MNKGLCNWRLFSLFGMMALLLAG. Residues 24 to 259 form a cytochrome c oxidase subunit II region; that stretch reads CGKPFLSTLQ…QNAKKPVVTD (236 aa). A run of 2 helical transmembrane segments spans residues 45–65 and 93–113; these read LMLL…IIFV and IIWT…TVLT. Residues His-178, Cys-219, Cys-223, and His-227 each coordinate Cu cation. The region spanning 260-356 is the Cytochrome c domain; it reads PVAKEGEAIF…TKYLMSLKVE (97 aa). Residues Cys-273, Cys-276, His-277, and Met-331 each contribute to the heme c site.

This sequence belongs to the cytochrome c oxidase subunit 2 family. It depends on Cu cation as a cofactor. Heme c is required as a cofactor.

The protein localises to the cell membrane. It catalyses the reaction 4 Fe(II)-[cytochrome c] + O2 + 8 H(+)(in) = 4 Fe(III)-[cytochrome c] + 2 H2O + 4 H(+)(out). In terms of biological role, subunits I and II form the functional core of the enzyme complex. Electrons originating in cytochrome c are transferred via heme a and Cu(A) to the binuclear center formed by heme a3 and Cu(B). This chain is Cytochrome c oxidase subunit 2 (ctaC), found in Bacillus sp. (strain PS3).